A 171-amino-acid polypeptide reads, in one-letter code: UPF0763 protein HPP12_0677 (171 aa).

The protein belongs to the UPF0763 family.

This chain is UPF0763 protein HPP12_0677, found in Helicobacter pylori (strain P12).